Reading from the N-terminus, the 831-residue chain is Sodium/hydrogen exchanger 3 (831 aa).

The signal sequence occupies residues 1 to 28 (MWHPALGPGWKPLLALALALTSLRGVRG). Residues 29-48 (IEEEPNSGGSFQIVTFKWHH) lie on the Extracellular side of the membrane. A helical transmembrane segment spans residues 49 to 71 (VQDPYIIALWILVASLAKIVFHL). Over 72–79 (SHKVTSVV) the chain is Cytoplasmic. The chain crosses the membrane as a helical span at residues 80-99 (PESALLIVLGLVLGGIVWAA). The Extracellular portion of the chain corresponds to 100–108 (DHIASFTLT). Residues 109–126 (PTLFFFYLLPPIVLDAGY) traverse the membrane as a helical segment. Topologically, residues 127–129 (FMP) are cytoplasmic. The chain crosses the membrane as a helical span at residues 130 to 165 (NRLFFGNLGTILLYAVIGTIWNAATTGLSLYGVFLS). A 1,2-diacyl-sn-glycero-3-phospho-(1D-myo-inositol) is bound by residues Gly-135, Gly-138, and Thr-139. At 166 to 178 (GLMGELKIGLLDF) the chain is on the extracellular side. A helical transmembrane segment spans residues 179–200 (LLFGSLIAAVDPVAVLAVFEEV). The Cytoplasmic portion of the chain corresponds to 201-202 (HV). Residues 203–234 (NEVLFIIVFGESLLNDAVTVVLYNVFESFVTL) form a helical membrane-spanning segment. Residues 235–241 (GGDAVTG) lie on the Extracellular side of the membrane. The helical transmembrane segment at 242-276 (VDCVKGIVSFFVVSLGGTLVGVIFAFLLSLVTRFT) threads the bilayer. Residues 277-278 (KH) lie on the Cytoplasmic side of the membrane. Residues 279–301 (VRIIEPGFVFVISYLSYLTSEML) traverse the membrane as a helical segment. The Extracellular portion of the chain corresponds to 302-303 (SL). The helical transmembrane segment at 304-320 (SAILAITFCGICCQKYV) threads the bilayer. Residues 321–327 (KANISEQ) are Cytoplasmic-facing. A helical membrane pass occupies residues 328–356 (SATTVRYTMKMLASGAETIIFMFLGISAV). The Extracellular portion of the chain corresponds to 357 to 364 (DPVIWTWN). The chain crosses the membrane as a helical span at residues 365-386 (TAFVLLTLVFISVYRAIGVVLQ). The Cytoplasmic portion of the chain corresponds to 387-399 (TWILNRYRMVQLE). Met-395 is an a 1,2-diacyl-sn-glycero-3-phospho-(1D-myo-inositol) binding site. Residues 400–423 (TIDQVVMSYGGLRGAVAYALVVLL) traverse the membrane as a helical segment. The Extracellular segment spans residues 424–430 (DEKKVKE). The helical transmembrane segment at 431–464 (KNLFVSTTLIVVFFTVIFQGLTIKPLVQWLKVKR) threads the bilayer. Residues 465–831 (SEQREPKLNE…QPASPESTHM (367 aa)) lie on the Cytoplasmic side of the membrane. A 1,2-diacyl-sn-glycero-3-phospho-(1D-myo-inositol) is bound by residues Gln-494, Ile-495, and His-497. A phosphoserine mark is found at Ser-552 and Ser-560. The tract at residues 573–587 (RPSTVEASVSYFLRE) is interaction with EZR. The segment at 588–665 (NVSAVCLDMQ…RKRLESFKSA (78 aa)) is interaction with NHERF4. An interaction with AHCYL1 region spans residues 589-693 (VSAVCLDMQS…AQKRRNSSIP (105 aa)). Phosphoserine is present on residues Ser-590 and Ser-605. Residue Ser-661 is modified to Phosphoserine; by SGK1. A phosphoserine mark is found at Ser-716, Ser-807, and Ser-810. Residues 808–831 (VDSFLQADGPEEQLQPASPESTHM) are disordered. Polar residues predominate over residues 822-831 (QPASPESTHM).

Belongs to the monovalent cation:p,roton antiporter 1 (CPA1) transporter (TC 2.A.36) family. Homodimer. Found in the forms of complex and dynamic macromolecular complexes. Binds NHERF1 and NHERF2. Interacts with NHERF4 and interactions decrease in response to elevated calcium ion levels. Interacts with PDZK1 (via C-terminal PDZ domain). Interacts with CHP1; this interaction increases trafficking and activity at the plasma membrane of SLC9A3. Interacts with CHP2 and SHANK2. Interacts with AHCYL1; the interaction is required for SLC9A3 activity. Interacts with EZR; interaction targets SLC9A3 to the apical membrane. Interacts with SNX27 (via PDZ domains); directs SLC9A3 membrane insertion from early endosomes to the plasma membrane. In terms of processing, phosphorylated by PRKACA at Ser-552 and Ser-605, which inhibits activity. Phosphorylation of Ser-605 is essential for cAMP-mediated inhibition of SLC9A3. Phosphorylation at Ser-661 by SGK1 is associated with increased abundance at the cell membrane. Phosphorylation at Ser-716 by CSNK2A1 regulates SLC9A3 activity through the formation of multiple signaling complexes. Most abundant in colon and small intestine, followed by kidney and stomach. In kidney, expressed in proximal tubules and outer medulla (at protein level).

The protein localises to the apical cell membrane. It is found in the cell membrane. It localises to the recycling endosome membrane. Its subcellular location is the early endosome membrane. It catalyses the reaction Na(+)(in) + H(+)(out) = Na(+)(out) + H(+)(in). Seems to switch between active and inactive modes in response to various stimuli. Activated directly or indirectly by membrane phosphatidylinositol (PIs). Regulated by a variety of auxiliary proteins, which facilitate the maturation, cell surface expression and function of the transporter. Inhibited specifically by the drug tenapanor. Functionally, plasma membrane Na(+)/H(+) antiporter. Exchanges intracellular H(+) ions for extracellular Na(+) in 1:1 stoichiometry, playing a key role in salt and fluid absorption and pH homeostasis. Major apical Na(+)/H(+) exchanger in kidney and intestine playing an important role in renal and intestine Na(+) absorption and blood pressure regulation. The polypeptide is Sodium/hydrogen exchanger 3 (Slc9a3) (Rattus norvegicus (Rat)).